The following is a 378-amino-acid chain: TelA-like protein SAUSA300_1299 (378 aa).

The protein belongs to the TelA family.

This chain is TelA-like protein SAUSA300_1299, found in Staphylococcus aureus (strain USA300).